Consider the following 305-residue polypeptide: Probable cell division protein WhiA (305 aa).

The segment at residues 269-302 (TIKELGELLEPSLGKSGVNHRLRKLVEQANELRK) is a DNA-binding region (H-T-H motif).

The protein belongs to the WhiA family.

Involved in cell division and chromosome segregation. This Lactococcus lactis subsp. lactis (strain IL1403) (Streptococcus lactis) protein is Probable cell division protein WhiA.